The following is a 301-amino-acid chain: XIAP-associated factor 1 (301 aa).

The TRAF-type zinc-finger motif lies at 22–99; that stretch reads LHEAYCLRFL…KLDMQLSKLE (78 aa). Positions 189–257 are disordered; sequence ILPSSLPSQA…KPRTSSPRGD (69 aa). Positions 193–205 are enriched in polar residues; that stretch reads SLPSQAAENQTST.

Interacts with BIRC4; the interaction is not detected in. Interacts with BIRC1, BIRC2, BIRC3, BIRC7 and BIRC8. Part of an complex consisting of BIRC4, XAF1 and BIRC5; the complex formation requires IFN-beta stimulation. Interacts with RNF114, the interaction increases XAF1 stability and proapoptotic effects, and may regulate IFN signaling. As to expression, widely expressed. Expression is frequently down-regulated in cancer cell lines. Isoform 5 is widely expressed. Expressed in placenta (at protein level).

The protein resides in the cytoplasm. It localises to the nucleus. It is found in the mitochondrion. In terms of biological role, seems to function as a negative regulator of members of the IAP (inhibitor of apoptosis protein) family. Inhibits anti-caspase activity of BIRC4. Induces cleavage and inactivation of BIRC4 independent of caspase activation. Mediates TNF-alpha-induced apoptosis and is involved in apoptosis in trophoblast cells. May inhibit BIRC4 indirectly by activating the mitochondrial apoptosis pathway. After translocation to mitochondria, promotes translocation of BAX to mitochondria and cytochrome c release from mitochondria. Seems to promote the redistribution of BIRC4 from the cytoplasm to the nucleus, probably independent of BIRC4 inactivation which seems to occur in the cytoplasm. The BIRC4-XAF1 complex mediates down-regulation of BIRC5/survivin; the process requires the E3 ligase activity of BIRC4. Seems to be involved in cellular sensitivity to the proapoptotic actions of TRAIL. May be a tumor suppressor by mediating apoptosis resistance of cancer cells. This chain is XIAP-associated factor 1 (XAF1), found in Homo sapiens (Human).